We begin with the raw amino-acid sequence, 164 residues long: uncharacterized protein (164 aa).

A Phosphoserine modification is found at serine 117.

This is an uncharacterized protein from Bacillus subtilis (strain 168).